A 337-amino-acid chain; its full sequence is Beta-glucosidase-like protein NCA3, mitochondrial (337 aa).

A compositionally biased stretch (low complexity) spans 57 to 67 (ESAATTTTLSS). The tract at residues 57–84 (ESAATTTTLSSSEKDTSEQKRDGGFQDG) is disordered. The segment covering 68 to 80 (SEKDTSEQKRDGG) has biased composition (basic and acidic residues).

It belongs to the SUN family.

The protein resides in the mitochondrion. In terms of biological role, involved in the mitochondrial expression of subunits 6 and 8 of the F0-F1 ATP synthase. In Saccharomyces cerevisiae (strain ATCC 204508 / S288c) (Baker's yeast), this protein is Beta-glucosidase-like protein NCA3, mitochondrial (NCA3).